A 382-amino-acid polypeptide reads, in one-letter code: Mannitol-1-phosphate 5-dehydrogenase (382 aa).

Position 3 to 14 (3 to 14 (ALHFGAGNIGRG)) interacts with NAD(+). An N6-acetyllysine modification is found at K269.

It belongs to the mannitol dehydrogenase family.

The catalysed reaction is D-mannitol 1-phosphate + NAD(+) = beta-D-fructose 6-phosphate + NADH + H(+). In Shigella sonnei (strain Ss046), this protein is Mannitol-1-phosphate 5-dehydrogenase.